Consider the following 496-residue polypeptide: Probable histidine ammonia-lyase (496 aa).

The 5-imidazolinone (Ala-Gly) cross-link spans A141–G143. A 2,3-didehydroalanine (Ser) modification is found at S142.

Belongs to the PAL/histidase family. Post-translationally, contains an active site 4-methylidene-imidazol-5-one (MIO), which is formed autocatalytically by cyclization and dehydration of residues Ala-Ser-Gly.

It is found in the cytoplasm. The catalysed reaction is L-histidine = trans-urocanate + NH4(+). Its pathway is amino-acid degradation; L-histidine degradation into L-glutamate; N-formimidoyl-L-glutamate from L-histidine: step 1/3. The polypeptide is Probable histidine ammonia-lyase (Thermoplasma acidophilum (strain ATCC 25905 / DSM 1728 / JCM 9062 / NBRC 15155 / AMRC-C165)).